Reading from the N-terminus, the 218-residue chain is MVEEQLSLSGVEEIAPKIETPKIEKRTVKERRQQVLTVLIHMLHSERGMERMTTARLAKEVGVSEAALYRYFPSKTKMFEALIEHIESTLLSRITASMRNETQTMNRIHDILQTILDFARKNPGLTRVLTGHALMFEEAQLQARVAQFFDRLEMQFVNILQMRKLREGRAFNVDERIIASHLVTLCEGQFMRYVRTNFRLNSSQSFEQQWRFIEPLFA.

The HTH tetR-type domain maps to 30 to 90 (ERRQQVLTVL…ALIEHIESTL (61 aa)). The segment at residues 53 to 72 (TTARLAKEVGVSEAALYRYF) is a DNA-binding region (H-T-H motif).

It belongs to the nucleoid occlusion factor SlmA family. Homodimer. Interacts with FtsZ.

It is found in the cytoplasm. The protein resides in the nucleoid. Required for nucleoid occlusion (NO) phenomenon, which prevents Z-ring formation and cell division over the nucleoid. Acts as a DNA-associated cell division inhibitor that binds simultaneously chromosomal DNA and FtsZ, and disrupts the assembly of FtsZ polymers. SlmA-DNA-binding sequences (SBS) are dispersed on non-Ter regions of the chromosome, preventing FtsZ polymerization at these regions. The protein is Nucleoid occlusion factor SlmA of Haemophilus influenzae (strain PittGG).